Reading from the N-terminus, the 664-residue chain is Exoribonuclease 2 (664 aa).

Residues 193–521 (RIDMTHIPFV…INHRMLKALI (329 aa)) form the RNB domain. The S1 motif domain maps to 568 to 650 (QTLFTGEIFD…ENRSLVAKPT (83 aa)).

It belongs to the RNR ribonuclease family. RNase II subfamily.

Its subcellular location is the cytoplasm. The catalysed reaction is Exonucleolytic cleavage in the 3'- to 5'-direction to yield nucleoside 5'-phosphates.. Its function is as follows. Involved in mRNA degradation. Hydrolyzes single-stranded polyribonucleotides processively in the 3' to 5' direction. The protein is Exoribonuclease 2 of Vibrio vulnificus (strain YJ016).